The following is a 33-amino-acid chain: Brevinin-2DYd (33 aa).

C27 and C33 form a disulfide bridge.

In terms of tissue distribution, expressed by the skin glands.

It is found in the secreted. Antimicrobial peptide. A mixture of Brevinin-2DYc/2DYd is active against the Gram-positive bacterium S.aureus (MIC=15 uM) and the Gram-negative bacterium E.coli (MIC=15 uM). This is Brevinin-2DYd from Rana dybowskii (Dybovsky's frog).